A 600-amino-acid chain; its full sequence is Protein GPR107 (600 aa).

The N-terminal stretch at 1-39 (MAALAPVGSPASRGPRLAAGLRLLPMLGLLQLLAEPGLG) is a signal peptide. Residues 40–263 (RVHHLALKDD…YLSAGEIPLP (224 aa)) lie on the Extracellular side of the membrane. 2 N-linked (GlcNAc...) asparagine glycosylation sites follow: N70 and N169. An intrachain disulfide couples C109 to C228. The segment covering 157–175 (SQEPNVNPASAGNQTQKTQ) has biased composition (polar residues). The tract at residues 157–185 (SQEPNVNPASAGNQTQKTQDGGKSKRSTV) is disordered. A compositionally biased stretch (basic and acidic residues) spans 176-185 (DGGKSKRSTV). N211 carries an N-linked (GlcNAc...) asparagine glycan. A helical transmembrane segment spans residues 264-284 (KLYISMAFFFFLSGTIWIHIL). Over 285–293 (RKRRNDVFK) the chain is Cytoplasmic. Residues 294–314 (IHWLMAALPFTKSLSLVFHAI) traverse the membrane as a helical segment. Over 315 to 337 (DYHYISSQGFPIEGWAVVYYITH) the chain is Extracellular. The chain crosses the membrane as a helical span at residues 338 to 358 (LLKGALLFITIALIGTGWAFI). The Cytoplasmic segment spans residues 359–368 (KHILSDKDKK). A helical transmembrane segment spans residues 369-389 (IFMIVIPLQVLANVAYIIIES). Residues 390 to 402 (TEEGTTEYGLWKD) lie on the Extracellular side of the membrane. Residues 403–423 (SLFLVDLLCCGAILFPVVWSI) traverse the membrane as a helical segment. Residues 424-498 (RHLQEASATD…AKLKLFRHYY (75 aa)) lie on the Cytoplasmic side of the membrane. A helical transmembrane segment spans residues 499–519 (VLIVCYIYFTRIIAFLLKLAV). The Extracellular portion of the chain corresponds to 520–524 (PFQWK). Residues 525 to 544 (WLYQLLDETATLVFFVLTGY) form a helical membrane-spanning segment. The Cytoplasmic segment spans residues 545 to 600 (KFRPASDNPYLQLSQEEEDLEMESVVTTSGVMESMKKVKKVTNGSVEPQGEWEGAV).

Belongs to the LU7TM family. Post-translationally, cleaved by FURIN to yield two fragments of 17 and 35 kDa that remain associated via a disulfide bond.

It localises to the cell membrane. The protein localises to the golgi apparatus. It is found in the trans-Golgi network membrane. Has been proposed to act as a receptor for neuronostatin, a peptide derived from the somatostatin/SST precursor. Involved in blood sugar regulation through the induction of glucagon in response to low glucose. Its function is as follows. (Microbial infection) Required for intoxication by Pseudomonas aeruginosa exotoxin A and Campylobacter jejuni CDT. May contribute to the retrograde transport of bacterial toxins, including cholera toxin, from the trans-Golgi network to the endoplasmic reticulum. This chain is Protein GPR107 (GPR107), found in Homo sapiens (Human).